Consider the following 343-residue polypeptide: Insertion element IS630 uncharacterized 39 kDa protein (343 aa).

The protein is Insertion element IS630 uncharacterized 39 kDa protein of Shigella sonnei.